A 33-amino-acid polypeptide reads, in one-letter code: Cytochrome b6-f complex subunit 5 (33 aa).

Residues 5–25 form a helical membrane-spanning segment; sequence LLFGIILGLISCVLAGLFVSA.

This sequence belongs to the PetG family. The 4 large subunits of the cytochrome b6-f complex are cytochrome b6, subunit IV (17 kDa polypeptide, PetD), cytochrome f and the Rieske protein, while the 4 small subunits are PetG, PetL, PetM and PetN. The complex functions as a dimer.

Its subcellular location is the plastid. The protein resides in the chloroplast thylakoid membrane. Functionally, component of the cytochrome b6-f complex, which mediates electron transfer between photosystem II (PSII) and photosystem I (PSI), cyclic electron flow around PSI, and state transitions. PetG is required for either the stability or assembly of the cytochrome b6-f complex. This is Cytochrome b6-f complex subunit 5 from Bigelowiella natans (Pedinomonas minutissima).